The chain runs to 164 residues: MKWKVSVLACILHVRFPGAEAQSFGLLDPKLCYLLDGILFIYGVIITALYLRAKFSRSAETAANLQDPNQLYNELNLGRREEYDVLEKKRARDPEMGGKQQRRRNPQEGVYNALQKDKMAEAYSEIGTKGERRRGKGHDGLYQGLSTATKDTYDALHMQTLAPR.

Residues 1–21 form the signal peptide; sequence MKWKVSVLACILHVRFPGAEA. Gln22 carries the post-translational modification Blocked amino end (Gln). At 22 to 30 the chain is on the extracellular side; it reads QSFGLLDPK. A helical membrane pass occupies residues 31–51; the sequence is LCYLLDGILFIYGVIITALYL. At 52–164 the chain is on the cytoplasmic side; that stretch reads RAKFSRSAET…ALHMQTLAPR (113 aa). Ser58 is modified (phosphoserine). ITAM domains follow at residues 61 to 89, 100 to 128, and 131 to 159; these read TAAN…LEKK, QQRR…EIGT, and ERRR…LHMQ. Tyr72 and Tyr83 each carry phosphotyrosine. Basic and acidic residues predominate over residues 87 to 96; the sequence is EKKRARDPEM. The tract at residues 87-111 is disordered; the sequence is EKKRARDPEMGGKQQRRRNPQEGVY. A phosphotyrosine mark is found at Tyr111, Tyr123, Tyr142, and Tyr153. Positions 124-143 are disordered; it reads SEIGTKGERRRGKGHDGLYQ.

The protein belongs to the CD3Z/FCER1G family. In terms of assembly, the TCR-CD3 complex is composed of a CD3D/CD3E and a CD3G/CD3E heterodimers that preferentially associate with TCRalpha and TCRbeta, respectively, to form TCRalpha/CD3E/CD3G and TCRbeta/CD3G/CD3E trimers. In turn, the hexamer interacts with CD3Z homodimer to form the TCR-CD3 complex. Alternatively, TCRalpha and TCRbeta can be replaced by TCRgamma and TCRdelta. Interacts with SLA. Interacts with SLA2. Interacts with TRAT1. Interacts with DOCK2. Interacts with SHB. Interacts with ZAP70. Interacts (tyrosine phosphorylated) with SHC1 (via SH2 domain). Interacts with PTPRC. Interacts with CRK; this interaction regulates CD3Z phosphorylation. Interacts (on T cell side) with CD81, ICAM1 and CD9 at immunological synapses between antigen-presenting cells and T cells. Interacts with CD160. Interacts with LY6E. Interacts with LY6E. The signaling subunit of immunoglobulin gamma (IgG) Fc receptor complex. As a homodimer or a heterodimer with FCER1G, associates with the ligand binding subunit FCGR3A (via transmembrane domain); this interaction is a prerequisite for Fc receptor complex expression on the cell surface. Interacts with CD5. Post-translationally, phosphorylated on Tyr residues after T-cell receptor triggering by LCK in association with CD4/CD8. As to expression, CD3Z is expressed in normal lymphoid tissue and in peripheral blood mononuclear cells (PBMCs). Expressed also in retinal ganglion cells.

The protein resides in the cell membrane. Its function is as follows. Part of the TCR-CD3 complex present on T-lymphocyte cell surface that plays an essential role in adaptive immune response. When antigen presenting cells (APCs) activate T-cell receptor (TCR), TCR-mediated signals are transmitted across the cell membrane by the CD3 chains CD3D, CD3E, CD3G and CD3Z. All CD3 chains contain immunoreceptor tyrosine-based activation motifs (ITAMs) in their cytoplasmic domain. Upon TCR engagement, these motifs become phosphorylated by Src family protein tyrosine kinases LCK and FYN, resulting in the activation of downstream signaling pathways. CD3Z ITAMs phosphorylation creates multiple docking sites for the protein kinase ZAP70 leading to ZAP70 phosphorylation and its conversion into a catalytically active enzyme. Plays an important role in intrathymic T-cell differentiation. Additionally, participates in the activity-dependent synapse formation of retinal ganglion cells (RGCs) in both the retina and dorsal lateral geniculate nucleus (dLGN). The protein is T-cell surface glycoprotein CD3 zeta chain (Cd247) of Mus musculus (Mouse).